Consider the following 20-residue polypeptide: Short cationic peptide-6a (20 aa).

Ser-20 carries the post-translational modification Serine amide.

In terms of tissue distribution, expressed by the venom gland.

It localises to the secreted. The polypeptide is Short cationic peptide-6a (Cupiennius salei (American wandering spider)).